The following is a 195-amino-acid chain: Imidazoleglycerol-phosphate dehydratase (195 aa).

Belongs to the imidazoleglycerol-phosphate dehydratase family.

It is found in the cytoplasm. The enzyme catalyses D-erythro-1-(imidazol-4-yl)glycerol 3-phosphate = 3-(imidazol-4-yl)-2-oxopropyl phosphate + H2O. It participates in amino-acid biosynthesis; L-histidine biosynthesis; L-histidine from 5-phospho-alpha-D-ribose 1-diphosphate: step 6/9. The protein is Imidazoleglycerol-phosphate dehydratase of Burkholderia thailandensis (strain ATCC 700388 / DSM 13276 / CCUG 48851 / CIP 106301 / E264).